Reading from the N-terminus, the 366-residue chain is Chorismate synthase (366 aa).

The NADP(+) site is built by Arg-47 and Arg-53. Residues 124-126 (RSS), Gly-286, 301-305 (KPTAT), and Arg-327 contribute to the FMN site.

It belongs to the chorismate synthase family. Homotetramer. The cofactor is FMNH2.

The catalysed reaction is 5-O-(1-carboxyvinyl)-3-phosphoshikimate = chorismate + phosphate. Its pathway is metabolic intermediate biosynthesis; chorismate biosynthesis; chorismate from D-erythrose 4-phosphate and phosphoenolpyruvate: step 7/7. Its function is as follows. Catalyzes the anti-1,4-elimination of the C-3 phosphate and the C-6 proR hydrogen from 5-enolpyruvylshikimate-3-phosphate (EPSP) to yield chorismate, which is the branch point compound that serves as the starting substrate for the three terminal pathways of aromatic amino acid biosynthesis. This reaction introduces a second double bond into the aromatic ring system. This chain is Chorismate synthase, found in Microcystis aeruginosa (strain NIES-843 / IAM M-2473).